Here is a 66-residue protein sequence, read N- to C-terminus: Large ribosomal subunit protein bL33c (66 aa).

This sequence belongs to the bacterial ribosomal protein bL33 family.

The protein localises to the plastid. The protein resides in the chloroplast. The sequence is that of Large ribosomal subunit protein bL33c from Carica papaya (Papaya).